Consider the following 421-residue polypeptide: Transcription factor rglT (421 aa).

The tract at residues Met1–Ser29 is disordered. A compositionally biased stretch (polar residues) spans Trp8 to Ser29. The zn(2)-C6 fungal-type DNA-binding region spans Cys38 to Cys65. The span at Glu346–Asp357 shows a compositional bias: basic and acidic residues. The disordered stretch occupies residues Glu346 to Ser371.

The protein localises to the nucleus. Functionally, transcription factor that is important for oxidative stress resistance and essential for gliotoxin (GT) self-protection through the regulation of a gene encoding a putative gliT homolog, even if E.nidulans does not produce gliotoxin itself. This Emericella nidulans (strain FGSC A4 / ATCC 38163 / CBS 112.46 / NRRL 194 / M139) (Aspergillus nidulans) protein is Transcription factor rglT.